We begin with the raw amino-acid sequence, 390 residues long: NADH-dependent butanol dehydrogenase B (390 aa).

Belongs to the iron-containing alcohol dehydrogenase family. As to quaternary structure, homodimer.

Its pathway is alcohol metabolism; butanol biosynthesis. The polypeptide is NADH-dependent butanol dehydrogenase B (bdhB) (Clostridium acetobutylicum (strain ATCC 824 / DSM 792 / JCM 1419 / IAM 19013 / LMG 5710 / NBRC 13948 / NRRL B-527 / VKM B-1787 / 2291 / W)).